Reading from the N-terminus, the 41-residue chain is Large ribosomal subunit protein bL36 (41 aa).

This sequence belongs to the bacterial ribosomal protein bL36 family.

The polypeptide is Large ribosomal subunit protein bL36 (Rhodopseudomonas palustris (strain BisA53)).